A 450-amino-acid chain; its full sequence is 6-phospho-beta-glucosidase (450 aa).

5 to 73 is a binding site for NAD(+); that stretch reads LKVVTIGGGS…VPMKLYKTLD (69 aa). Residues arginine 96 and asparagine 150 each coordinate substrate. Mn(2+)-binding residues include cysteine 172 and histidine 203. The active-site Proton acceptor is the tyrosine 258.

Homotetramer. It depends on NAD(+) as a cofactor. Mn(2+) is required as a cofactor. Co(2+) serves as cofactor. Requires Ni(2+) as cofactor.

The enzyme catalyses 6-phospho-beta-D-glucosyl-(1-&gt;4)-D-glucose + H2O = D-glucose 6-phosphate + D-glucose. In terms of biological role, hydrolyzes a wide variety of P-beta-glucosides including cellobiose-6P, salicin-6P, arbutin-6P, gentiobiose-6P, methyl-beta-glucoside-6P and p-nitrophenyl-beta-D-glucopyranoside-6P. Is also able to hydrolyze phospho-N,N'-diacetylchitobiose. In Escherichia coli (strain K12), this protein is 6-phospho-beta-glucosidase (chbF).